The sequence spans 340 residues: Serine/threonine-protein kinase PDIK1L (340 aa).

The Protein kinase domain occupies 8 to 333; it reads YDLIREVGRG…LELRLVQIAF (326 aa). Residues 14-22 and K37 contribute to the ATP site; that span reads VGRGSYGVV. D164 functions as the Proton acceptor in the catalytic mechanism.

This sequence belongs to the protein kinase superfamily. Ser/Thr protein kinase family.

It is found in the nucleus. The enzyme catalyses L-seryl-[protein] + ATP = O-phospho-L-seryl-[protein] + ADP + H(+). It carries out the reaction L-threonyl-[protein] + ATP = O-phospho-L-threonyl-[protein] + ADP + H(+). The polypeptide is Serine/threonine-protein kinase PDIK1L (PDIK1L) (Pongo abelii (Sumatran orangutan)).